A 250-amino-acid polypeptide reads, in one-letter code: Putative (5-formylfuran-3-yl)methyl phosphate synthase (250 aa).

The Schiff-base intermediate with substrate role is filled by K29. K87 functions as the Proton acceptor in the catalytic mechanism.

The protein belongs to the MfnB family.

The catalysed reaction is 2 D-glyceraldehyde 3-phosphate = 4-(hydroxymethyl)-2-furancarboxaldehyde phosphate + phosphate + 2 H2O. In terms of biological role, catalyzes the formation of 4-(hydroxymethyl)-2-furancarboxaldehyde phosphate (4-HFC-P) from two molecules of glyceraldehyde-3-P (GA-3-P). In Streptomyces griseus subsp. griseus (strain JCM 4626 / CBS 651.72 / NBRC 13350 / KCC S-0626 / ISP 5235), this protein is Putative (5-formylfuran-3-yl)methyl phosphate synthase.